A 372-amino-acid polypeptide reads, in one-letter code: Innexin shaking-B (372 aa).

At Met-1 to Ser-21 the chain is on the cytoplasmic side. Residues Ile-22–Ile-42 traverse the membrane as a helical segment. Over Thr-43–Tyr-110 the chain is Extracellular. The chain crosses the membrane as a helical span at residues Gln-111–Trp-131. Topologically, residues Lys-132–Tyr-182 are cytoplasmic. The helical transmembrane segment at Val-183–Phe-203 threads the bilayer. Over Asp-204 to Lys-267 the chain is Extracellular. The chain crosses the membrane as a helical span at residues Ile-268–Ile-288. Residues Tyr-289 to Ala-372 lie on the Cytoplasmic side of the membrane.

This sequence belongs to the pannexin family. As to quaternary structure, monomer (isoform Lethal). In terms of tissue distribution, isoform Neural is expressed in synapses of giant fibers (GF), in a large thoracic cell in location of postsynaptic target and optic lobe lamina and medulla. Isoform Lethal is expressed in embryonic mesodermal derivatives. During metamorphosis, both isoforms are dynamically expressed in pupal nervous system.

Its subcellular location is the cell membrane. The protein resides in the cell junction. The protein localises to the gap junction. Structural component of the gap junctions at electrical synapses in distal and mid-depth levels in the lamina. Isoform Lethal forms voltage sensitive intercellular channels through homotypic interactions. This Drosophila melanogaster (Fruit fly) protein is Innexin shaking-B (shakB).